The chain runs to 670 residues: PML-RARA-regulated adapter molecule 1 (670 aa).

Residues 1–561 (MAHHLPAAME…PQQLPPMDPK (561 aa)) are disordered. The span at 31–43 (DLPKKPPKPEFGK) shows a compositional bias: basic and acidic residues. Tandem repeats lie at residues 70 to 81 (KPPPPEVTDLPK), 82 to 93 (KPPPPEVTDLPK), 94 to 105 (KPPPPEVTDLPK), and 106 to 117 (KPPPPEVTDLPK). The tract at residues 70-165 (KPPPPEVTDL…SLPEPGAPAR (96 aa)) is 4 X 12 AA repeats of K-P-P-[PQ]-P-[EQ]-[VAF]-T-D-L-P-K. Over residues 114 to 129 (DLPKKPSKLELSDLSK) the composition is skewed to basic and acidic residues. Ser-340 carries the post-translational modification Phosphoserine. Residues 386-398 (SSASESSLPAAVA) are compositionally biased toward low complexity. Residues 454-463 (PAKPPLPPGP) are compositionally biased toward pro residues. The segment covering 504 to 514 (EIYELYDDVEP) has biased composition (acidic residues). The segment covering 515–528 (RDDSSPSPKGRDEA) has biased composition (basic and acidic residues). Residues 571–649 (KAEREFRKKF…PRTALLPLET (79 aa)) form the SH3 domain.

As to quaternary structure, interacts with SKAP2, LCP2 and DBNL. May interact with LYN. Interacts with NEK6. Post-translationally, may be phosphorylated on tyrosines. As to expression, expressed in peripheral blood leukocytes and bone marrow. Expressed in monocytes, and to a lesser extent in granulocytes and lymphocytes. Not expressed in non hematopoietic tissues except in lung.

Functionally, may be involved in myeloid differentiation. May be involved in integrin signaling in neutrophils. Binds to PtdIns(4)P. The sequence is that of PML-RARA-regulated adapter molecule 1 (PRAM1) from Homo sapiens (Human).